The chain runs to 481 residues: Beta-amyrin 16-beta-monooxygenase (481 aa).

Residues 4–24 traverse the membrane as a helical segment; sequence LFIIISLVIVILTTIFILSNL. C428 contributes to the heme binding site.

Belongs to the cytochrome P450 family. It depends on heme as a cofactor. In terms of tissue distribution, highly expressed in roots. Expressed at very low levels in leaves and petals.

The protein localises to the membrane. It catalyses the reaction beta-amyrin + reduced [NADPH--hemoprotein reductase] + O2 = maniladiol + oxidized [NADPH--hemoprotein reductase] + H2O + H(+). The catalysed reaction is oleanolate + reduced [NADPH--hemoprotein reductase] + O2 = cochalate + oxidized [NADPH--hemoprotein reductase] + H2O + H(+). Functionally, involved in triterpenoid saponin biosynthesis in roots. Catalyzes the hydroxylation of beta-amyrin at the C-16 beta position to form maniladiol. Is also able to oxidize oleanolat to cochalate. Has weak activity catalyzing the three-step oxidation at C-28 of beta-amyrin to form oleanolate. The polypeptide is Beta-amyrin 16-beta-monooxygenase (Platycodon grandiflorus (Balloon flower)).